A 361-amino-acid chain; its full sequence is Glutamate 5-kinase (361 aa).

Lys-7 contributes to the ATP binding site. Ser-47, Asp-134, and Asn-146 together coordinate substrate. Residues 166-167 (TD) and 209-215 (TGGMTTK) each bind ATP. A PUA domain is found at 274–345 (LGTLQLDEGA…EAIETQMSTN (72 aa)).

It belongs to the glutamate 5-kinase family.

The protein resides in the cytoplasm. The enzyme catalyses L-glutamate + ATP = L-glutamyl 5-phosphate + ADP. The protein operates within amino-acid biosynthesis; L-proline biosynthesis; L-glutamate 5-semialdehyde from L-glutamate: step 1/2. Functionally, catalyzes the transfer of a phosphate group to glutamate to form L-glutamate 5-phosphate. The chain is Glutamate 5-kinase from Prochlorococcus marinus (strain MIT 9313).